A 574-amino-acid polypeptide reads, in one-letter code: Lipase maturation factor 1 (574 aa).

A disordered region spans residues 1-39; that stretch reads MRPDSLVMAAPEGSLRKRKVGGAEHSPASQPSLARDPAD. Over 1 to 49 the chain is Cytoplasmic; sequence MRPDSLVMAAPEGSLRKRKVGGAEHSPASQPSLARDPADSPARLHTGTF. A helical membrane pass occupies residues 50–72; the sequence is WLTRIVLLRALAFIYFVAFLVAF. At 73 to 127 the chain is on the lumenal side; it reads NQNKALIGDRGLLPCKLYLKNVQEYFQGSTGWAAWTYAPTIMWLLDWSDMNFNLD. Residues 128-151 form a helical membrane-spanning segment; it reads LIALLGLGISSFVLVTGCANMILM. Over 152–207 the chain is Cytoplasmic; sequence TALWALYMSLVNVGQIWYSFGWESQLLETGFLGIFLSPLWTLSRLPKNTPTSQIVL. Residues 208–221 form a helical membrane-spanning segment; the sequence is WGFRWLIFRIMLGA. The Lumenal segment spans residues 222 to 292; that stretch reads GLIKVRGDKC…LGRRMRILHG (71 aa). The helical transmembrane segment at 293–321 threads the bilayer; the sequence is VLQILFQVILIISGNLSFLNWLTIVPSLA. Over 322 to 367 the chain is Cytoplasmic; the sequence is CFDDAALGFLFPSGPQGLKKQVLEIQREDTQRVQPKPRDRGCLVRQ. The helical transmembrane segment at 368 to 388 threads the bilayer; sequence VVNISLGILVAWLSVPVVINL. The Lumenal segment spans residues 389 to 574; it reads LSSRQIMNTS…LPEPPSRHTR (186 aa).

This sequence belongs to the lipase maturation factor family. As to quaternary structure, interacts with LPL and SEL1L. As to expression, expressed in all tissues synthesizing lipoprotein lipase (Lpl) and hepatic lipase (Lipc), including adipose tissue, skeletal muscle, heart, and liver. Expressed at higher levels in tissues that express little or no lipase activity such as testis and pancreas suggesting additional functions in these tissues.

The protein resides in the endoplasmic reticulum membrane. Functionally, involved in the maturation of specific proteins in the endoplasmic reticulum. Required for maturation and transport of active lipoprotein lipase (LPL) through the secretory pathway. Each LMF1 molecule chaperones 50 or more molecules of LPL. This chain is Lipase maturation factor 1 (Lmf1), found in Mus musculus (Mouse).